Consider the following 806-residue polypeptide: Ribonucleoside-diphosphate reductase large subunit-like protein (806 aa).

Belongs to the ribonucleoside diphosphate reductase large chain family.

It is found in the virion. It localises to the host cytoplasm. Functionally, does not possess a ribonucleotide reductase activity. Betaherpesviruses probably use another strategy to expand the dNTP pool in a quiescent host cell. This is Ribonucleoside-diphosphate reductase large subunit-like protein from Human herpesvirus 7 (strain JI) (HHV-7).